Here is a 251-residue protein sequence, read N- to C-terminus: Small ribosomal subunit protein uS2 (251 aa).

Belongs to the universal ribosomal protein uS2 family.

In Deinococcus deserti (strain DSM 17065 / CIP 109153 / LMG 22923 / VCD115), this protein is Small ribosomal subunit protein uS2.